Consider the following 546-residue polypeptide: Chaperonin GroEL (546 aa).

Residues 30 to 33 (TLGP), Lys-51, 87 to 91 (DGTTT), Gly-415, and Asp-495 each bind ATP.

It belongs to the chaperonin (HSP60) family. Forms a cylinder of 14 subunits composed of two heptameric rings stacked back-to-back. Interacts with the co-chaperonin GroES.

The protein resides in the cytoplasm. The catalysed reaction is ATP + H2O + a folded polypeptide = ADP + phosphate + an unfolded polypeptide.. Its function is as follows. Together with its co-chaperonin GroES, plays an essential role in assisting protein folding. The GroEL-GroES system forms a nano-cage that allows encapsulation of the non-native substrate proteins and provides a physical environment optimized to promote and accelerate protein folding. In Brucella suis (strain ATCC 23445 / NCTC 10510), this protein is Chaperonin GroEL.